We begin with the raw amino-acid sequence, 217 residues long: tRNA (guanine-N(7)-)-methyltransferase (217 aa).

The S-adenosyl-L-methionine site is built by Glu-43, Asp-68, Asn-101, and Asn-123. A substrate-binding site is contributed by Lys-127. Residues 129-134 form an interaction with RNA region; the sequence is RHNKRR. Substrate is bound by residues Asp-159 and 196 to 199; that span reads TEYE.

Belongs to the class I-like SAM-binding methyltransferase superfamily. TrmB family.

The enzyme catalyses guanosine(46) in tRNA + S-adenosyl-L-methionine = N(7)-methylguanosine(46) in tRNA + S-adenosyl-L-homocysteine. It participates in tRNA modification; N(7)-methylguanine-tRNA biosynthesis. Catalyzes the formation of N(7)-methylguanine at position 46 (m7G46) in tRNA. The polypeptide is tRNA (guanine-N(7)-)-methyltransferase (Clostridium botulinum (strain 657 / Type Ba4)).